We begin with the raw amino-acid sequence, 358 residues long: Biotin synthase (358 aa).

The region spanning asparagine 44–arginine 272 is the Radical SAM core domain. 3 residues coordinate [4Fe-4S] cluster: cysteine 59, cysteine 63, and cysteine 66. Cysteine 103, cysteine 136, cysteine 196, and arginine 267 together coordinate [2Fe-2S] cluster.

The protein belongs to the radical SAM superfamily. Biotin synthase family. As to quaternary structure, homodimer. The cofactor is [4Fe-4S] cluster. It depends on [2Fe-2S] cluster as a cofactor.

It carries out the reaction (4R,5S)-dethiobiotin + (sulfur carrier)-SH + 2 reduced [2Fe-2S]-[ferredoxin] + 2 S-adenosyl-L-methionine = (sulfur carrier)-H + biotin + 2 5'-deoxyadenosine + 2 L-methionine + 2 oxidized [2Fe-2S]-[ferredoxin]. The protein operates within cofactor biosynthesis; biotin biosynthesis; biotin from 7,8-diaminononanoate: step 2/2. In terms of biological role, catalyzes the conversion of dethiobiotin (DTB) to biotin by the insertion of a sulfur atom into dethiobiotin via a radical-based mechanism. The sequence is that of Biotin synthase from Cutibacterium acnes (strain DSM 16379 / KPA171202) (Propionibacterium acnes).